A 174-amino-acid chain; its full sequence is Peptide deformylase (174 aa).

2 residues coordinate Fe cation: Cys94 and His136. Glu137 is a catalytic residue. Residue His140 coordinates Fe cation.

This sequence belongs to the polypeptide deformylase family. Fe(2+) serves as cofactor.

It catalyses the reaction N-terminal N-formyl-L-methionyl-[peptide] + H2O = N-terminal L-methionyl-[peptide] + formate. Its function is as follows. Removes the formyl group from the N-terminal Met of newly synthesized proteins. Requires at least a dipeptide for an efficient rate of reaction. N-terminal L-methionine is a prerequisite for activity but the enzyme has broad specificity at other positions. This chain is Peptide deformylase, found in Rhizobium meliloti (strain 1021) (Ensifer meliloti).